Reading from the N-terminus, the 554-residue chain is Hydroxylamine reductase (554 aa).

Positions 3, 6, 18, and 25 each coordinate [2Fe-2S] cluster. Hybrid [4Fe-2O-2S] cluster contacts are provided by His-252, Glu-276, Cys-320, Cys-408, Cys-436, Cys-461, Glu-495, and Lys-497. Cys-408 is modified (cysteine persulfide).

This sequence belongs to the HCP family. It depends on [2Fe-2S] cluster as a cofactor. Requires hybrid [4Fe-2O-2S] cluster as cofactor.

It is found in the cytoplasm. The catalysed reaction is A + NH4(+) + H2O = hydroxylamine + AH2 + H(+). Its function is as follows. Catalyzes the reduction of hydroxylamine to form NH(3) and H(2)O. This Shewanella sp. (strain MR-4) protein is Hydroxylamine reductase.